The following is a 215-amino-acid chain: ATP-dependent Clp protease proteolytic subunit 3 (215 aa).

Catalysis depends on Ser-119, which acts as the Nucleophile. His-144 is an active-site residue.

The protein belongs to the peptidase S14 family. As to quaternary structure, fourteen ClpP subunits assemble into 2 heptameric rings which stack back to back to give a disk-like structure with a central cavity, resembling the structure of eukaryotic proteasomes.

The protein resides in the cytoplasm. The enzyme catalyses Hydrolysis of proteins to small peptides in the presence of ATP and magnesium. alpha-casein is the usual test substrate. In the absence of ATP, only oligopeptides shorter than five residues are hydrolyzed (such as succinyl-Leu-Tyr-|-NHMec, and Leu-Tyr-Leu-|-Tyr-Trp, in which cleavage of the -Tyr-|-Leu- and -Tyr-|-Trp bonds also occurs).. Functionally, cleaves peptides in various proteins in a process that requires ATP hydrolysis. Has a chymotrypsin-like activity. Plays a major role in the degradation of misfolded proteins. The chain is ATP-dependent Clp protease proteolytic subunit 3 from Prochlorococcus marinus subsp. pastoris (strain CCMP1986 / NIES-2087 / MED4).